Here is a 537-residue protein sequence, read N- to C-terminus: GTPase LSG1-1 (537 aa).

The CP-type G domain maps to 158 to 362; the sequence is WRQLWRVLER…LCDCPGLVFP (205 aa). Positions 176-180 match the DARXP motif motif; the sequence is DARDP. Residues 206–209 form a G4 region; that stretch reads NKAD. 206–209 contacts GTP; that stretch reads NKAD. The segment at 234 to 236 is G5; that stretch reads SAK. The G1 stretch occupies residues 311–318; sequence GYPNVGKS. 314–319 provides a ligand contact to GTP; it reads NVGKSS. The interval 337-341 is G2; it reads GKTKH. Residues 355-358 form a G3 region; it reads DCPG. G358 is a GTP binding site. Residues 484-508 form a disordered region; sequence LGAETREGSQTEKKGEEAPSLGLDQ. Basic and acidic residues predominate over residues 487-500; that stretch reads ETREGSQTEKKGEE.

It belongs to the TRAFAC class YlqF/YawG GTPase family. Ubiquitous, with the highest expression in stem and hypsophyll on day 66.

Its subcellular location is the cytoplasm. In terms of biological role, GTPase that might be redundant with LSG1-2 for ribosome biogenesis. Binds to 23S rRNA. This Arabidopsis thaliana (Mouse-ear cress) protein is GTPase LSG1-1.